The chain runs to 59 residues: UPF0434 protein GOX0764 (59 aa).

This sequence belongs to the UPF0434 family.

The sequence is that of UPF0434 protein GOX0764 from Gluconobacter oxydans (strain 621H) (Gluconobacter suboxydans).